The chain runs to 1132 residues: Large proline-rich protein BAG6 (1132 aa).

At Met-1 the chain carries N-acetylmethionine. Residues 17 to 92 (LEVLVKTLDS…HLVERAPPQT (76 aa)) enclose the Ubiquitin-like domain. 2 disordered regions span residues 87–126 (RAPP…SVHD) and 189–272 (LQCR…NHPS). A compositionally biased stretch (low complexity) spans 95–108 (PSGASSGTGSASAT). Phosphoserine is present on residues Ser-96 and Ser-113. A Phosphothreonine modification is found at Thr-117. 2 stretches are compositionally biased toward pro residues: residues 200 to 210 (SQPPPQPPAVT) and 251 to 262 (TPGPAPAGPTPA). Copy 1 of the repeat occupies 242-270 (RAPAQNPELTPGPAPAGPTPAPETNAPNH). Positions 242–636 (RAPAQNPELT…VASPTITVAM (395 aa)) are 4 X 29 AA approximate repeats. Thr-350 is modified (phosphothreonine). Disordered stretches follow at residues 385 to 441 (VTMT…TSHP), 461 to 528 (IQDS…TLQG), and 560 to 603 (PGMA…PSMA). Positions 393–407 (RPPPTPNAEAPPPGP) are enriched in pro residues. Residues 408–426 (GQASSVAPSSTNVESSAEG) show a composition bias toward low complexity. Residues 415–443 (PSSTNVESSAEGAPPPGPAPPPATSHPRV) form repeat 2. Pro residues-rich tracts occupy residues 427 to 438 (APPPGPAPPPAT) and 507 to 520 (PTPP…PGGP). Positions 569-586 (ATASASAGTTNTATTAGP) are enriched in low complexity. 2 consecutive repeat copies span residues 574-602 (SAGT…QPSM) and 608-636 (SQLL…TVAM). Pro residues predominate over residues 588–599 (PGGPAQPPPTPQ). The tract at residues 651–692 (QATQTAPPPPPPPPPPPPAPEQQTMPPPGSPSGGAGSPGGLG) is disordered. Over residues 656 to 680 (APPPPPPPPPPPPAPEQQTMPPPGS) the composition is skewed to pro residues. A compositionally biased stretch (gly residues) spans 681-692 (PSGGAGSPGGLG). A phosphoserine mark is found at Val-832, Ser-964, and Ser-973. A disordered region spans residues 947 to 1132 (PQPLPEEPME…NAQRAFADDP (186 aa)). Over residues 1005–1020 (AETEPWAAAVPPEWVP) the composition is skewed to low complexity. Residues 1010-1040 (WAAAVPPEWVPIIQQDIQSQRKVKPQPPLSD) are required for interaction with GET4. The Nuclear localization site signature appears at 1012–1054 (AAVPPEWVPIIQQDIQSQRKVKPQPPLSDAYLSGMPAKRRKTM). The interval 1022–1132 (IQQDIQSQRK…NAQRAFADDP (111 aa)) is sufficient for the delivery of client proteins to the endoplasmic reticulum. Residue Thr-1053 is modified to Phosphothreonine. Positions 1058–1115 (GPQLLLSEAVSRAAKAAGARPLTSPESLSRDLEAPEVQESYRQQLRSDIQKRLQEDPN) are BAG-similar domain, required and sufficient for interaction with UBL4A. Low complexity predominate over residues 1066–1076 (AVSRAAKAAGA). Residues Ser-1081 and Ser-1117 each carry the phosphoserine modification.

In terms of assembly, component of the BAG6/BAT3 complex, also named BAT3 complex, at least composed of BAG6, UBL4A and GET4/TRC35. Interacts with GET4; the interaction is direct and localizes BAG6 in the cytosol. Interacts with UBL4A; the interaction is direct and required for UBL4A protein stability. Interacts with AIFM1. Interacts with HSPA2. Interacts with CTCFL. Interacts with p300/EP300. Interacts (via ubiquitin-like domain) with RNF126; required for BAG6-dependent ubiquitination of proteins mislocalized to the cytosol. Interacts (via ubiquitin-like domain) with SGTA; SGTA competes with RNF126 by binding the same region of BAG6, thereby promoting deubiquitination of BAG6-target proteins and rescuing them from degradation. Interacts with ricin A chain. Interacts with VCP and AMFR; both form the VCP/p97-AMFR/gp78 complex. Interacts with SYVN1. Interacts with USP13; the interaction is direct and may mediate UBL4A deubiquitination. Interacts with ZFAND2B. Interacts with KPNA2. Interacts with UBQLN4. (Microbial infection) Interacts with L.pneumophila Lpg2160 and LegU1 proteins. Ricin can induce a cleavage by the caspase CASP3. The released C-terminal peptide induces apoptosis. Post-translationally, (Microbial infection) In case of infection by L.pneumophila, ubiquitinated by the SCF(LegU1) complex. Expressed by immature dendritic cells (at protein level).

It localises to the cytoplasm. Its subcellular location is the cytosol. It is found in the nucleus. The protein localises to the secreted. The protein resides in the extracellular exosome. Its function is as follows. ATP-independent molecular chaperone preventing the aggregation of misfolded and hydrophobic patches-containing proteins. Functions as part of a cytosolic protein quality control complex, the BAG6/BAT3 complex, which maintains these client proteins in a soluble state and participates in their proper delivery to the endoplasmic reticulum or alternatively can promote their sorting to the proteasome where they undergo degradation. The BAG6/BAT3 complex is involved in the post-translational delivery of tail-anchored/type II transmembrane proteins to the endoplasmic reticulum membrane. Recruited to ribosomes, it interacts with the transmembrane region of newly synthesized tail-anchored proteins and together with SGTA and ASNA1 mediates their delivery to the endoplasmic reticulum. Client proteins that cannot be properly delivered to the endoplasmic reticulum are ubiquitinated by RNF126, an E3 ubiquitin-protein ligase associated with BAG6 and are sorted to the proteasome. SGTA which prevents the recruitment of RNF126 to BAG6 may negatively regulate the ubiquitination and the proteasomal degradation of client proteins. Similarly, the BAG6/BAT3 complex also functions as a sorting platform for proteins of the secretory pathway that are mislocalized to the cytosol either delivering them to the proteasome for degradation or to the endoplasmic reticulum. The BAG6/BAT3 complex also plays a role in the endoplasmic reticulum-associated degradation (ERAD), a quality control mechanism that eliminates unwanted proteins of the endoplasmic reticulum through their retrotranslocation to the cytosol and their targeting to the proteasome. It maintains these retrotranslocated proteins in an unfolded yet soluble state condition in the cytosol to ensure their proper delivery to the proteasome. BAG6 is also required for selective ubiquitin-mediated degradation of defective nascent chain polypeptides by the proteasome. In this context, it may participate in the production of antigenic peptides and play a role in antigen presentation in immune response. BAG6 is also involved in endoplasmic reticulum stress-induced pre-emptive quality control, a mechanism that selectively attenuates the translocation of newly synthesized proteins into the endoplasmic reticulum and reroutes them to the cytosol for proteasomal degradation. BAG6 may ensure the proper degradation of these proteins and thereby protects the endoplasmic reticulum from protein overload upon stress. By inhibiting the polyubiquitination and subsequent proteasomal degradation of HSPA2 it may also play a role in the assembly of the synaptonemal complex during spermatogenesis. Also positively regulates apoptosis by interacting with and stabilizing the proapoptotic factor AIFM1. By controlling the steady-state expression of the IGF1R receptor, indirectly regulates the insulin-like growth factor receptor signaling pathway. Involved in DNA damage-induced apoptosis: following DNA damage, accumulates in the nucleus and forms a complex with p300/EP300, enhancing p300/EP300-mediated p53/TP53 acetylation leading to increase p53/TP53 transcriptional activity. When nuclear, may also act as a component of some chromatin regulator complex that regulates histone 3 'Lys-4' dimethylation (H3K4me2). In terms of biological role, released extracellularly via exosomes, it is a ligand of the natural killer/NK cells receptor NCR3 and stimulates NK cells cytotoxicity. It may thereby trigger NK cells cytotoxicity against neighboring tumor cells and immature myeloid dendritic cells (DC). Functionally, mediates ricin-induced apoptosis. The protein is Large proline-rich protein BAG6 of Homo sapiens (Human).